Here is a 206-residue protein sequence, read N- to C-terminus: Probable thymidylate kinase (206 aa).

Residue 7 to 14 (GIDGSGKS) participates in ATP binding.

The protein belongs to the thymidylate kinase family.

The enzyme catalyses dTMP + ATP = dTDP + ADP. The protein is Probable thymidylate kinase of Methanospirillum hungatei JF-1 (strain ATCC 27890 / DSM 864 / NBRC 100397 / JF-1).